Reading from the N-terminus, the 447-residue chain is Rab GDP dissociation inhibitor alpha (447 aa).

S427 carries the post-translational modification Phosphoserine.

Belongs to the Rab GDI family. Interacts with RHOH. Interacts with the non-phosphorylated forms of RAB1A, RAB3A, RAB5A, RAB5B, RAB5C, RAB8A, RAB8B, RAB10, RAB12, RAB35, and RAB43.

It localises to the cytoplasm. The protein localises to the golgi apparatus. Its subcellular location is the trans-Golgi network. Functionally, regulates the GDP/GTP exchange reaction of most Rab proteins by inhibiting the dissociation of GDP from them, and the subsequent binding of GTP to them. Promotes the dissociation of GDP-bound Rab proteins from the membrane and inhibits their activation. Promotes the dissociation of RAB1A, RAB3A, RAB5A and RAB10 from membranes. In Canis lupus familiaris (Dog), this protein is Rab GDP dissociation inhibitor alpha (GDI1).